Here is a 236-residue protein sequence, read N- to C-terminus: Eukaryotic translation initiation factor 3 subunit J (236 aa).

Residues 1 to 65 form a disordered region; the sequence is MADDWESAAD…APAKPKPNKA (65 aa). The span at 28 to 46 shows a compositional bias: acidic residues; the sequence is GEDEDEDIKDSWEDEEEKK. Over residues 47 to 58 the composition is skewed to basic and acidic residues; the sequence is DEEKPTKTEAPA.

Belongs to the eIF-3 subunit J family. As to quaternary structure, component of the eukaryotic translation initiation factor 3 (eIF-3) complex. The eIF-3 complex interacts with pix.

Its subcellular location is the cytoplasm. Functionally, component of the eukaryotic translation initiation factor 3 (eIF-3) complex, which is involved in protein synthesis of a specialized repertoire of mRNAs and, together with other initiation factors, stimulates binding of mRNA and methionyl-tRNAi to the 40S ribosome. The eIF-3 complex specifically targets and initiates translation of a subset of mRNAs involved in cell proliferation. In Drosophila melanogaster (Fruit fly), this protein is Eukaryotic translation initiation factor 3 subunit J.